We begin with the raw amino-acid sequence, 1684 residues long: Latrophilin Cirl (1684 aa).

Topologically, residues 1 to 765 are extracellular; sequence MASNNYIQIM…LFTMFDGNMR (765 aa). Residues 21–110 form the SUEL-type lectin domain; the sequence is ACEGKKLTIE…KYLEAHYQCV (90 aa). 4 N-linked (GlcNAc...) asparagine glycosylation sites follow: asparagine 138, asparagine 251, asparagine 297, and asparagine 336. Positions 181–300 are disordered; that stretch reads PPATHATPPG…GPSVSSNGSA (120 aa). Composition is skewed to polar residues over residues 250 to 260 and 278 to 300; these read SNATAPSNTRI and KSSP…NGSA. The segment at 370-391 is disordered; that stretch reads SFDEDDEEMAGTSTTTPMSTSS. Residues 381–391 are compositionally biased toward low complexity; the sequence is TSTTTPMSTSS. N-linked (GlcNAc...) asparagine glycans are attached at residues asparagine 396, asparagine 653, asparagine 701, and asparagine 728. The 194-residue stretch at 559–752 folds into the GAIN-B domain; it reads RSVVQKVKNI…AILMDVVDEH (194 aa). Disulfide bonds link cysteine 707–cysteine 734 and cysteine 722–cysteine 736. Residues 707-752 form a GPS region; sequence CVFWNYIDHAWSANGCSLESTNRTHSVCSCNHLTNFAILMDVVDEH. Residues 766-786 form a helical membrane-spanning segment; the sequence is IFIYISIAICVVFIVIALLTL. The Cytoplasmic segment spans residues 787–799; sequence KLFNGVFVKSART. Residues 800 to 820 traverse the membrane as a helical segment; the sequence is SIYINIYICLLAIELLFLLGI. The Extracellular segment spans residues 821 to 826; sequence EQTETS. A helical membrane pass occupies residues 827 to 847; the sequence is IFCGFITVFLHCAILSGTSWF. At 848–873 the chain is on the cytoplasmic side; the sequence is CYEAFHSYSTLTSDELLLEVDQTPKV. A helical membrane pass occupies residues 874-894; sequence NCYYLLSYGLSLSVVAISLVI. At 895–918 the chain is on the extracellular side; the sequence is NPSTYTQNDYCVLMEANAVFYATF. The helical transmembrane segment at 919–939 threads the bilayer; the sequence is VAPVLIFFMAAIGYTFLSWII. The Cytoplasmic portion of the chain corresponds to 940-966; the sequence is MCRKSRTGLKTKEHTRLATVRFDIRCS. Residues 967–987 form a helical membrane-spanning segment; sequence FVFFLLLSAVWCSAYFYLRGA. Over 988–994 the chain is Extracellular; that stretch reads KMDEDVT. Residues 995–1015 traverse the membrane as a helical segment; it reads GIYGYNFICFNTLLGLYIFVF. Residues 1016–1684 lie on the Cytoplasmic side of the membrane; sequence HCIQNEKIRR…VRCYLEPLAK (669 aa). The disordered stretch occupies residues 1080 to 1100; it reads PLGTNDDAHDEQQQQQHMSAT. A phosphoserine mark is found at serine 1156, serine 1247, and serine 1254. Disordered stretches follow at residues 1228 to 1255, 1270 to 1353, 1441 to 1520, and 1587 to 1669; these read KPNS…LHSR, KTKP…APPP, SRYG…LPPQ, and SMRG…SAML. The span at 1298 to 1314 shows a compositional bias: low complexity; the sequence is QQQQQLRQQRQQQQQQL. A phosphoserine mark is found at serine 1315 and serine 1316. The segment covering 1328–1348 has biased composition (low complexity); that stretch reads LHLQHQQQQQQQRRAGGQQQL. The segment covering 1455–1466 has biased composition (polar residues); that stretch reads RNQQQQQHSLAQ. Acidic residues-rich tracts occupy residues 1476-1489 and 1499-1512; these read DEDD…EETT and CDEE…DMED. Low complexity predominate over residues 1631–1654; that stretch reads QQLQKLSPQSTTSSSSHTSHSNPH.

This sequence belongs to the G-protein coupled receptor 2 family. LN-TM7 subfamily. Forms a heterodimer, consisting of a large extracellular region non-covalently linked to a seven-transmembrane moiety. In terms of processing, proteolytically cleaved into 2 subunits, an extracellular subunit and a seven-transmembrane subunit.

It localises to the cell membrane. This chain is Latrophilin Cirl, found in Drosophila persimilis (Fruit fly).